Consider the following 257-residue polypeptide: Acetylglutamate kinase (257 aa).

Substrate-binding positions include 43-44, Arg65, and Asn157; that span reads GG.

The protein belongs to the acetylglutamate kinase family. ArgB subfamily.

Its subcellular location is the cytoplasm. It carries out the reaction N-acetyl-L-glutamate + ATP = N-acetyl-L-glutamyl 5-phosphate + ADP. The protein operates within amino-acid biosynthesis; L-arginine biosynthesis; N(2)-acetyl-L-ornithine from L-glutamate: step 2/4. Functionally, catalyzes the ATP-dependent phosphorylation of N-acetyl-L-glutamate. The polypeptide is Acetylglutamate kinase (Pasteurella multocida (strain Pm70)).